The sequence spans 3473 residues: MSSCSLKCSILPCVHIENNKNELHIENSKDENGINNIIQEDPNNGHNDNINNNDINNNNNNNDNNNTIDNCICEKSSEEISVHTEKCVHTVSLDVNVKDYNFEEFINSFESDRRNILLNTFNYFFYNNFGNLSEVKLKNGSIAHNYYYRKIALNIMNYDYEKEYRLYDDNRKINENSIIMQSSAYCINEENNSRPPLYEDLFLKKTKITNIDDKNTKETIKKYKLPFEPNFYSNRFFFLDNDMNGSLHQSTKNCTKYCNSFVVNYNNVSNCRKKKKKNTNPIIFNNINNNNNNNCDHVKPLCCSYILRFEGPPPHFLIIKFDKVNRKAYIVKRVPVNKNISFNLAKFIAEKYINMLRKNLRKREIKMERKRNNNILNSRTKRGSSKKEHIESNMENNNDNINNNDDDNNSNNNDDNNDNINNNNDNINNNNDNINNNNNSNNNDDDHLVCNNEIVPNNDCGTINNYSNNSSTNYSSDYSFSRNGEVLNEYNEEDLNNYLLNVDINSLPYEDYNSENYVNEKMCKNEYLDIDLENLIFSRDAEKYIKFLSNVKIYFLKKLDDIDYFNTNCKDPFENKIVIIVKMKYDICVKSKVFIFENMKDLESEYEYVDIDENEKDNDNICFKKGGDNTFVSLLNDDGHMNDANNNNNNNINCGDDGNNNNNNNNSFDADINSSSHVGNEPTGDKHETSKKEDTENEEAINAKTEGNFITRNFFGLFKNECNANNGSDKEHLKEEDVCNKNTEEEEKMNIIKSDNVNNNNNNNNNNNNKKEKGKKKKEKDADKNKKHKKKNIHDNNRKKKMTVNYRKKIIQFIRNNIYINSYIYDCFENKYTNNKFFKDDVIIIRNTKSEEQEEEEHQLSYNVPYYIYELNKFVFIKFMKFEKYINKNHDIANGYIKYLLQSNIKCINGYMIGIRWVPNVFAYEYYVYKITEDVKSDFKKENEYMINNNMNGNNNNNNNYNNDRYNNSRNCNTIYNYSLAIEKDSNEITMKYLIDYENKVIDNVLCVLHEYYQTSLFTEHCIFNLFKLVLLRVSLYIGVFNTKVITLDLDKAMYRMKKFSEPISMYDNYGFSENDNNMLLQGGDMLNMEYLMNEVDNNNNNNNNNNNNNVNNISNNGTNLEENANNANNANNPNNANNPNNANNSNNADYVNDYNDGYKEEDDDDEEEDNNLTKKKDEENTNYNININGENMNMNSNMNVEETFDETKNKNNLRITFSSVHFDNEGNKISDNNIYENRAKHVSDSDMNNNNNNNNNTNINYPSSHDKYNELFVKNEKCESESYLPNKLKNKKKVSYNLDNTSISLRNKRSRDVGSNQNCDHNNNSRGGGGGKCYGILKGEGDQFSIKYYSTSANNTSSTLINNKKEYYSNASDFSGTSHLTAKHKYHLRSSNPQSTDNYSSEEYMQRSSMRTRGAERSANRNKMLYKLMNKNGLIEPYWWFFYNLYENACIHEGSTITNNMNNNNNNINGNNYNNYYFNKYNNNNNNNNNNNNNQKKGTCGEDALNEEQKRILEKKYKINLLNHFCAKTEKLKIKYISMVHDIIYKKYMLLNNTIFPRNLHESEILYTLFPHEPHTFMFLYTDDNFQYQNEVFLKQITFSDNINWYHYPLGGQYNNIDLYKNDVHDEKERMVLHINDYYNGLGTSRYVIGKDFYVDHLIMGDSKDSTSNMLMSKNLKYSNLPNYEKVRANYREAHLLNEKEWKNIQNGGYYKTMLHLGEDMEHPYNFGVYQDPITSAYETNRNDYGFTNGILTNKILEPSTSSAVTAAVVSNNTGTTQNNNKYGTNSNNNNNNNNNNNNNNNNNKVFTFERRRRGVKTNEYYDYFVTDKTLLGGKGKFHNVGEKRSVSNTNFGRNNRYYDQMIGEDDDKKNTSDNDLTSLKRRKNGNSKRAKSNNLSNVKGYSIYNVENNGDAQADNGNNNVNNNLKGNMKGNNLNSNNIKSDVINHDDSLIPMGPLPTGVYFDSARKLWRCQWKENGKFKTKGFSLIHYSTLEEARKQCILYRCDVGNIPVKSEWLNPVYVRSSYFYSKKYSSSAHNATSAGTNYTTTAAHRELKTSSLNLSRLKEKTGVSQGVSTANNNDNNVNNMDNNVNNVDNNVNNVDNNLNNVDNNVNNNNVKSSGVEKGFMDGSSKGSNDENYYVGQTNTIGNTNNNRYSTRNNTAACAAANDKGNEIDISILQEFVSKNKEGGGVSVDGGGLLESALIERGLIESGLLDSGSVNKNNMSLRLNSKNVMLGYNGEENNKKKKKKNIVEDNIKNMNNVENIKNIKDIKNVNNMNNMNNMNNMNNYNFLFADKKNKNNNLNIGVKEEEKRRKQVDVVGDGSGTQALKRSKRSKSNSKYKMDLRVGDLKEDFGKDMSNLINEEDIENFRNTFNKEYLKSVLTNDNNNDGINNNNDDNNDDNNDDNNNNNNNNNKNNNKNSSNNKSNNNKKNYNNKNQNNNDNNNDNGNNNNNNNDDNNDDNNIRSNSFFLDGKDINNEYINNENFPNDIQSFFKFLNSKDVKDETKGKKYLDFKLGNGLDGEEEGGGDYDEKEDDLLDENKNGLNFLNDDINNNNNNNNNNNNNNNNNNNNNNNNNYNNDLFEAMKAFMKYNGNMMNNEKGELLYGKGGNNNNNNNNNNSGTYVKNKKSSKYDNKSYGGDGIPRKEMKKERSKKSQKLLNSQVNESSAPASNYKGGGVQFYMNLDTTNLLAASLMTNNIINNLNNQGNGDNSHVNNNYNSNALGDMMKSSNKEGVGLSWSPSNMCPDIFFQDIQNFINFAKRKERMNNGKEENGEGVQTNVRNTNNNAHIVGNNNNNNRNSGSIIENDVYENYLKSLIVQYENEEKLKEKQYVQMNNNNNNNNNNNNNNNNNNVKYFQFGDKEEEEDKENLANLDNDKLEKEKNGGGGVVSSSSSSPTTGFFQKYLNIFSKKKNGNESEEYMNNKSQVDNSKYVECGNGDKETNDYNTRRKKKDEKFSVSSNALYDMSKVLNNNGLGSSMNSYNEAYKKNLNFLLQKSSMNNNNMNNNNMNNNNMNNNNMNNNNMNNNNMNLNVYNNVTGDNNHMDNLDGGNNKGLKKYNNNLGFNNMSEASLYEYFNFAALNNNNGSNILGQDRKKNGHISINTKSSSIFMNGMHMNNYHNSVNNMNSFNSNSDHMEPKYDGYDDNMMRGMVERALSSSLYFDNKQKGKESSNNLNNNNNNNNNIINNMNHMNYINNNNNNIINNMNHMNYINNNNNNNQYVDGQLTENEISNLNVAGNVKSGKKKKGSTNDDENINLIKQSLPKGIYYDHAKKLYRVQYIINNSIKTKGFSVKKLGLAQAKIEAESFRNFCLENGLLNSRKRRLNSPYNKKDESFSMMPDNEEILSNLLFLYNSNMNNSMNKMSINNDGNNNDGNNNDGNNNDDNNNDDNNNDDNNNDGNNNDDNNNEGINNDDNNNEGINNDDNNNEGINNNDDNNNNDDNNNEGINNDDNNDDNNNDNEMSQNE.

Disordered regions lie at residues 35 to 61 (NNIIQEDPNNGHNDNINNNDINNNNNN), 366 to 450 (KMER…HLVC), 647 to 704 (NNNN…INAK), 750 to 801 (NIIK…RKKK), 1096 to 1196 (VDNN…MNMN), 1300 to 1328 (DNTSISLRNKRSRDVGSNQNCDHNNNSRG), 1388 to 1418 (HLRSSNPQSTDNYSSEEYMQRSSMRTRGAER), 1773 to 1807 (NNTGTTQNNNKYGTNSNNNNNNNNNNNNNNNNNKV), and 1864 to 1898 (IGEDDDKKNTSDNDLTSLKRRKNGNSKRAKSNNLS). Low complexity-rich tracts occupy residues 44 to 61 (NGHNDNINNNDINNNNNN), 396 to 442 (NNND…NSNN), and 647 to 666 (NNNNNINCGDDGNNNNNNNN). Residues 683–694 (TGDKHETSKKED) show a composition bias toward basic and acidic residues. Residues 751–768 (IIKSDNVNNNNNNNNNNN) are compositionally biased toward low complexity. Over residues 785 to 801 (NKKHKKKNIHDNNRKKK) the composition is skewed to basic residues. Positions 1098–1156 (NNNNNNNNNNNNNVNNISNNGTNLEENANNANNANNPNNANNPNNANNSNNADYVNDYN) are enriched in low complexity. Over residues 1160 to 1171 (KEEDDDDEEEDN) the composition is skewed to acidic residues. A compositionally biased stretch (low complexity) spans 1182-1196 (TNYNININGENMNMN). 2 stretches are compositionally biased toward polar residues: residues 1314-1326 (VGSNQNCDHNNNS) and 1390-1412 (RSSNPQSTDNYSSEEYMQRSSMR). The segment covering 1773–1805 (NNTGTTQNNNKYGTNSNNNNNNNNNNNNNNNNN) has biased composition (low complexity). The segment covering 1881-1893 (LKRRKNGNSKRAK) has biased composition (basic residues). A DNA-binding region (AP2/ERF 1) is located at residues 1957–2011 (PLPTGVYFDSARKLWRCQWKENGKFKTKGFSLIHYSTLEEARKQCILYRCDVGNI). Disordered regions lie at residues 2068–2088 (EKTGVSQGVSTANNNDNNVNN), 2319–2343 (QVDVVGDGSGTQALKRSKRSKSNSK), 2387–2470 (TNDN…NIRS), 2520–2584 (LGNG…NYNN), 2609–2677 (LYGK…PASN), 2840–2860 (MNNNNNNNNNNNNNNNNNNVK), 2881–2902 (NDKLEKEKNGGGGVVSSSSSSP), and 2937–2960 (KYVECGNGDKETNDYNTRRKKKDE). Positions 2333 to 2342 (KRSKRSKSNS) are enriched in basic residues. Low complexity-rich tracts occupy residues 2388 to 2400 (NDNNNDGINNNND) and 2409 to 2460 (DNNN…NNND). The segment covering 2525-2542 (DGEEEGGGDYDEKEDDLL) has biased composition (acidic residues). Composition is skewed to low complexity over residues 2557–2584 (NNNNNNNNNNNNNNNNNNNNNNNNNYNN) and 2615–2624 (NNNNNNNNNN). Residues 2663 to 2675 (LLNSQVNESSAPA) show a composition bias toward polar residues. The span at 2841 to 2858 (NNNNNNNNNNNNNNNNNN) shows a compositional bias: low complexity. The segment covering 2943–2953 (NGDKETNDYNT) has biased composition (basic and acidic residues). The AP2/ERF 2 DNA-binding region spans 3268–3321 (SLPKGIYYDHAKKLYRVQYIINNSIKTKGFSVKKLGLAQAKIEAESFRNFCLEN). Residues 3369-3391 (KMSINNDGNNNDGNNNDGNNNDD) show a composition bias toward low complexity. Residues 3369–3473 (KMSINNDGNN…NNDNEMSQNE (105 aa)) are disordered. Residues 3392–3403 (NNNDDNNNDDNN) show a composition bias toward acidic residues. The span at 3404–3457 (NDGNNNDDNNNEGINNDDNNNEGINNDDNNNEGINNNDDNNNNDDNNNEGINND) shows a compositional bias: low complexity.

Its subcellular location is the nucleus. The polypeptide is AP2/ERF domain-containing protein PFD0985w (Plasmodium falciparum (isolate 3D7)).